Reading from the N-terminus, the 517-residue chain is Xaa-Pro dipeptidase (517 aa).

Mn(2+) is bound by residues D244, D255, H336, E381, and E420.

Belongs to the peptidase M24B family. Bacterial-type prolidase subfamily. In terms of assembly, monomer. Mn(2+) serves as cofactor.

The catalysed reaction is Xaa-L-Pro dipeptide + H2O = an L-alpha-amino acid + L-proline. It carries out the reaction diisopropyl fluorophosphate + H2O = diisopropyl phosphate + fluoride + 2 H(+). The enzyme catalyses An aryl dialkyl phosphate + H2O = dialkyl phosphate + an aryl alcohol.. Functionally, splits dipeptides with a prolyl or hydroxyprolyl residue in the C-terminal position and a nonpolar amino acid at the N-terminal position. Also catalyzes the hydrolysis of toxic organophosphorus cholinesterase-inhibiting compounds including insecticide paraoxon and nerve gases such as diisopropylfluorophosphate (DFP), O-isopropyl methylphosphonofluoridate (sarin), O-pinacolyl methylphosphonofluoridate (soman), and O-cyclohexyl methylphosphonofluoridate. In Alteromonas sp, this protein is Xaa-Pro dipeptidase (pepQ).